The chain runs to 1368 residues: MAYSFTEKKRIRKSFAKRATVHQVPFLLATQIESYTQFLQAETPTARRKTEGLQAAFNAIFPISSHNGLARMEFVSYHLSNPPFDVKECQQRGLTFHSALRAKVRLIINDRENPGKVKEVKEQEVYMGEIPLMTSTGSFVINGTERVIVSQLHRSPGVFFEHDKGKTHSSGKLLFSARIIPYRGSWLDFEFDPKDILYFRVDRRRKMPVTILLKSIGLTPEQILAHFFVFDNFTLQAEGAQLEFVPERLRGEVARFDIADKNGRVVVEKDKRINAKHIRDLDSAGTKLISVPEDYLLGRVLAKNIIDPDTGEVIANANDELTETLLENLREAGVKQIQTLYTNDLDQGPYMSQTLRVDETADQTAARIAIYRMMRPGEPPTEEAVEALFQRLFYSEESYDLSRVGRMKVNSRLGRPSGEGAMVLQDEDILETIKILVNLRNGKGEVDDIDHLGNRRVRCVGELAENQFRAGLSRVERAVKERLGQAETENLMPHDLINSKPISSAIREFFGSSQLSQFMDQTNPLSEITHKRRVSALGPGGLTRERAGFEVRDVHPTHYGRVCPIETPEGPNIGLINSLALYARLNEYGFLETPYRKVVDSKLTDQVDYLSAIEEGKYVVAQANATVDADGNLTDELVSAREGSERETRMVTPDRVQYIDVAPSQIVSAAASLVPFLEHDDANRALMGANMQRQAVPCLRPDKPLVGTGIERTVAVDSGTAVQAMRGGVVDYVDAMRIVIRVNDDEAVAGEVGVDIYNLIKYTRSNQNTNINQRPMVKVGDHVARGDVIADGASTDLGELALGQNMLVAFMPWNGYNFEDSILISERVVAEDRYTSIHIEELSVVARDTKLGPEEITRDISNLAEAQLARLDESGITYIGAEVEAGDVLVGKVTPKGETQLTPEEKLLRAIFGEKASDVKDTSLRVPSGMSGIVIDVQVFTREGVTRDKRAQSIIDDELKRYRLDLNDQLRIVEGDAFQRLERLLIDKTVNGGPKKLAKGAKITKEYLADIDRYHWFDIRPADEELAAQLEAVKEAIEQKRHEFDLAFEEKRKKLTQGDELPPGVIKMVKVYLAVKRRLQPGDKMAGRHGNKGVVSKITPIEDMPYMADGTPADIVLNPLGVPSRMNVGQILETHLGWAARGLGERIGNMLKAQAKAAEVRKLLTQIYNESGKVEDLDSLSDSEVLELAENLKKGVPFATPVFDGAHEDEIRRMLDLAYPEEIAKEKGLTASKQQVTLFDGRTGEAFERPVTLGVMHMLKLHHLVDDKMHARSTGPYSLVTQQPLGGKAQFGGQRFGEMEVWALEAYGASYVLQEMLTVKSDDVNGRTKVYENIVKGEHSIDAGMPESFNVLVKEIRSLGIDIDLDRY.

It belongs to the RNA polymerase beta chain family. As to quaternary structure, the RNAP catalytic core consists of 2 alpha, 1 beta, 1 beta' and 1 omega subunit. When a sigma factor is associated with the core the holoenzyme is formed, which can initiate transcription.

The catalysed reaction is RNA(n) + a ribonucleoside 5'-triphosphate = RNA(n+1) + diphosphate. Its function is as follows. DNA-dependent RNA polymerase catalyzes the transcription of DNA into RNA using the four ribonucleoside triphosphates as substrates. This is DNA-directed RNA polymerase subunit beta from Cupriavidus necator (strain ATCC 17699 / DSM 428 / KCTC 22496 / NCIMB 10442 / H16 / Stanier 337) (Ralstonia eutropha).